We begin with the raw amino-acid sequence, 179 residues long: Large ribosomal subunit protein uL5 (179 aa).

This sequence belongs to the universal ribosomal protein uL5 family. In terms of assembly, part of the 50S ribosomal subunit; part of the 5S rRNA/L5/L18/L25 subcomplex. Contacts the 5S rRNA and the P site tRNA. Forms a bridge to the 30S subunit in the 70S ribosome.

Functionally, this is one of the proteins that bind and probably mediate the attachment of the 5S RNA into the large ribosomal subunit, where it forms part of the central protuberance. In the 70S ribosome it contacts protein S13 of the 30S subunit (bridge B1b), connecting the 2 subunits; this bridge is implicated in subunit movement. Contacts the P site tRNA; the 5S rRNA and some of its associated proteins might help stabilize positioning of ribosome-bound tRNAs. The protein is Large ribosomal subunit protein uL5 of Salmonella arizonae (strain ATCC BAA-731 / CDC346-86 / RSK2980).